Here is a 143-residue protein sequence, read N- to C-terminus: Large ribosomal subunit protein uL11 (143 aa).

Belongs to the universal ribosomal protein uL11 family. Part of the ribosomal stalk of the 50S ribosomal subunit. Interacts with L10 and the large rRNA to form the base of the stalk. L10 forms an elongated spine to which L12 dimers bind in a sequential fashion forming a multimeric L10(L12)X complex. In terms of processing, one or more lysine residues are methylated.

Its function is as follows. Forms part of the ribosomal stalk which helps the ribosome interact with GTP-bound translation factors. This Paracidovorax citrulli (strain AAC00-1) (Acidovorax citrulli) protein is Large ribosomal subunit protein uL11.